A 69-amino-acid chain; its full sequence is Ribosome modulation factor (69 aa).

This sequence belongs to the ribosome modulation factor family.

The protein localises to the cytoplasm. During stationary phase, converts 70S ribosomes to an inactive dimeric form (100S ribosomes). In Marinomonas mediterranea (strain ATCC 700492 / JCM 21426 / NBRC 103028 / MMB-1), this protein is Ribosome modulation factor.